The sequence spans 218 residues: Histone chaperone ASF1B (218 aa).

Belongs to the ASF1 family. Interacts with histone H3 and histone H4. Interacts strongly with the N-terminus of TOUSLED. In terms of processing, phosphorylated in vitro by TOUSLED.

It is found in the nucleus. Histone chaperone that facilitates histone deposition and histone exchange and removal during nucleosome assembly and disassembly. The sequence is that of Histone chaperone ASF1B (ASF1B) from Arabidopsis thaliana (Mouse-ear cress).